We begin with the raw amino-acid sequence, 320 residues long: Methenyltetrahydromethanopterin cyclohydrolase (320 aa).

The protein belongs to the MCH family.

The protein resides in the cytoplasm. It catalyses the reaction 5,10-methenyl-5,6,7,8-tetrahydromethanopterin + H2O = N(5)-formyl-5,6,7,8-tetrahydromethanopterin + H(+). It participates in one-carbon metabolism; methanogenesis from CO(2); 5,10-methenyl-5,6,7,8-tetrahydromethanopterin from CO(2): step 3/3. Functionally, catalyzes the reversible interconversion of 5-formyl-H(4)MPT to methenyl-H(4)MPT(+). The chain is Methenyltetrahydromethanopterin cyclohydrolase (mch) from Methanothermobacter thermautotrophicus (strain ATCC 29096 / DSM 1053 / JCM 10044 / NBRC 100330 / Delta H) (Methanobacterium thermoautotrophicum).